Reading from the N-terminus, the 222-residue chain is UPF0758 protein YE0063 (222 aa).

Residues 100–222 enclose the MPN domain; that stretch reads VLQNPEITQK…CVSFAERGWL (123 aa). Zn(2+) contacts are provided by H171, H173, and D184. The JAMM motif motif lies at 171-184; the sequence is HNHPSGKAEPSQAD.

It belongs to the UPF0758 family. YicR subfamily.

The protein is UPF0758 protein YE0063 of Yersinia enterocolitica serotype O:8 / biotype 1B (strain NCTC 13174 / 8081).